Consider the following 337-residue polypeptide: DNA-directed RNA polymerase subunit alpha (337 aa).

Positions 1–233 (MVREKVKVST…NLFIPFLHVE (233 aa)) are alpha N-terminal domain (alpha-NTD). The interval 267 to 337 (LAFQYIFIDQ…IEKAFQKKID (71 aa)) is alpha C-terminal domain (alpha-CTD).

The protein belongs to the RNA polymerase alpha chain family. As to quaternary structure, in plastids the minimal PEP RNA polymerase catalytic core is composed of four subunits: alpha, beta, beta', and beta''. When a (nuclear-encoded) sigma factor is associated with the core the holoenzyme is formed, which can initiate transcription.

Its subcellular location is the plastid. It localises to the chloroplast. The catalysed reaction is RNA(n) + a ribonucleoside 5'-triphosphate = RNA(n+1) + diphosphate. Functionally, DNA-dependent RNA polymerase catalyzes the transcription of DNA into RNA using the four ribonucleoside triphosphates as substrates. The protein is DNA-directed RNA polymerase subunit alpha of Arabis hirsuta (Hairy rock-cress).